A 488-amino-acid polypeptide reads, in one-letter code: Palmitoyltransferase ZDHHC14 (488 aa).

Topologically, residues M1–Q60 are cytoplasmic. Residues T61–F81 traverse the membrane as a helical segment. Residues D82–K89 are Lumenal-facing. A helical membrane pass occupies residues I90–L110. At R111–R208 the chain is on the cytoplasmic side. Residues K165–L215 enclose the DHHC domain. The S-palmitoyl cysteine intermediate role is filled by C195. Residues F209–I229 traverse the membrane as a helical segment. At T230 to A255 the chain is on the lumenal side. A helical transmembrane segment spans residues V256–I276. The Cytoplasmic segment spans residues S277–V488. Residue S455 is modified to Phosphoserine.

It belongs to the DHHC palmitoyltransferase family. ERF2/ZDHHC9 subfamily. In terms of tissue distribution, widely expressed.

It localises to the endoplasmic reticulum membrane. Its subcellular location is the golgi apparatus. The protein resides in the golgi stack membrane. It carries out the reaction L-cysteinyl-[protein] + hexadecanoyl-CoA = S-hexadecanoyl-L-cysteinyl-[protein] + CoA. Palmitoyltransferase that could catalyze the addition of palmitate onto various protein substrates. May have a palmitoyltransferase activity toward the beta-2 adrenergic receptor/ADRB2 and thereby regulate G protein-coupled receptor signaling. May play a role in cell differentiation and apoptosis. The polypeptide is Palmitoyltransferase ZDHHC14 (Homo sapiens (Human)).